Consider the following 347-residue polypeptide: L-threonine 3-dehydrogenase (347 aa).

Cys42 is a binding site for Zn(2+). Residues Thr44 and His47 each act as charge relay system in the active site. Zn(2+) is bound by residues His67, Glu68, Cys97, Cys100, Cys103, and Cys111. Residues Ile179, Glu199, Arg204, 266–268 (LGL), and 291–292 (IT) each bind NAD(+).

It belongs to the zinc-containing alcohol dehydrogenase family. Homotetramer. Zn(2+) is required as a cofactor.

The protein localises to the cytoplasm. It carries out the reaction L-threonine + NAD(+) = (2S)-2-amino-3-oxobutanoate + NADH + H(+). Its pathway is amino-acid degradation; L-threonine degradation via oxydo-reductase pathway; glycine from L-threonine: step 1/2. Catalyzes the NAD(+)-dependent oxidation of L-threonine to 2-amino-3-ketobutyrate. The sequence is that of L-threonine 3-dehydrogenase from Caldanaerobacter subterraneus subsp. tengcongensis (strain DSM 15242 / JCM 11007 / NBRC 100824 / MB4) (Thermoanaerobacter tengcongensis).